Consider the following 374-residue polypeptide: Protein RecA (374 aa).

66-73 (GPESSGKT) lines the ATP pocket. Residues 326-374 (KLGVGVHPEESATEPGADAASAAPADAAPAVPAPTTAKATKSKATAAKS) are disordered. A compositionally biased stretch (low complexity) spans 338 to 374 (TEPGADAASAAPADAAPAVPAPTTAKATKSKATAAKS).

It belongs to the RecA family.

It localises to the cytoplasm. Functionally, can catalyze the hydrolysis of ATP in the presence of single-stranded DNA, the ATP-dependent uptake of single-stranded DNA by duplex DNA, and the ATP-dependent hybridization of homologous single-stranded DNAs. It interacts with LexA causing its activation and leading to its autocatalytic cleavage. The protein is Protein RecA of Streptomyces coelicolor (strain ATCC BAA-471 / A3(2) / M145).